A 499-amino-acid polypeptide reads, in one-letter code: Trichoplein keratin filament-binding protein (499 aa).

Coiled coils occupy residues 17 to 143 (LEQQ…LYEQ), 169 to 304 (EQIT…LSAL), and 405 to 485 (NRER…TQRG). Residues 260 to 426 (RKMEQCRKKT…RQFTSREKKQ (167 aa)) form a trichohyalin/plectin homology domain region.

The protein belongs to the TCHP family.

Its subcellular location is the cytoplasm. The protein localises to the cytoskeleton. The protein resides in the microtubule organizing center. It is found in the centrosome. May act as a 'capping' or 'branching' protein for keratin filaments in the cell periphery. May regulate K8/K18 filament and desmosome organization mainly at the apical or peripheral regions of simple epithelial cells. This Xenopus laevis (African clawed frog) protein is Trichoplein keratin filament-binding protein.